The primary structure comprises 270 residues: Zinc finger protein ZAT2 (270 aa).

Polar residues-rich tracts occupy residues 1 to 28 and 36 to 48; these read MSNT…YNQN and LTNN…SSSP. Residues 1-64 are disordered; the sequence is MSNTSNSDPN…QPDPDASQIA (64 aa). The C2H2-type 1 zinc finger occupies 65–87; it reads RPCTECGKQFGSLKALFGHMRCH. Residues 95–119 form a disordered region; it reads INPPSNFKRRINSNAASSSSSWDPS. Residues 106–115 show a composition bias toward low complexity; sequence NSNAASSSSS. C2H2-type zinc fingers lie at residues 148–170 and 211–233; these read FECD…RATH and HRCN…MRCH.

As to quaternary structure, interacts (via the EAR motif) with TPL. As to expression, expressed exclusively in pollen.

The protein resides in the nucleus. In terms of biological role, mediates the regulation of male germ cell division by DUO1. In Arabidopsis thaliana (Mouse-ear cress), this protein is Zinc finger protein ZAT2.